A 92-amino-acid polypeptide reads, in one-letter code: UPF0223 protein EF_2462 (92 aa).

The protein belongs to the UPF0223 family.

The polypeptide is UPF0223 protein EF_2462 (Enterococcus faecalis (strain ATCC 700802 / V583)).